Consider the following 574-residue polypeptide: Sulfate adenylyltransferase (574 aa).

An N-terminal region spans residues 1–170 (MANAPHGGVL…VQAVSKPAYY (170 aa)). A catalytic region spans residues 171–395 (DYVALRYTPA…LRESYPPKAK (225 aa)). Sulfate is bound at residue glutamine 198. Residues 198 to 201 (QTRN) and 292 to 295 (GRDH) contribute to the ATP site. Active-site residues include threonine 199, arginine 200, and asparagine 201. A sulfate-binding site is contributed by arginine 200. Residue alanine 296 participates in sulfate binding. Methionine 334 serves as a coordination point for ATP. The tract at residues 396-574 (QGFTLFLTGL…ILLLEAQSLI (179 aa)) is allosteric regulation domain; adenylyl-sulfate kinase-like. Residues 435–438 (ETVR), arginine 452, 478–479 (IA), and lysine 519 contribute to the 3'-phosphoadenylyl sulfate site.

In the N-terminal section; belongs to the sulfate adenylyltransferase family. It in the C-terminal section; belongs to the APS kinase family. Homohexamer. Dimer of trimers.

It localises to the cytoplasm. The enzyme catalyses sulfate + ATP + H(+) = adenosine 5'-phosphosulfate + diphosphate. It participates in sulfur metabolism; hydrogen sulfide biosynthesis; sulfite from sulfate: step 1/3. With respect to regulation, allosterically inhibited by 3'-phosphoadenosine 5'-phosphosulfate (PAPS). Catalyzes the first intracellular reaction of sulfate assimilation, forming adenosine-5'-phosphosulfate (APS) from inorganic sulfate and ATP. Plays an important role in sulfate activation as a component of the biosynthesis pathway of sulfur-containing amino acids. This chain is Sulfate adenylyltransferase, found in Mycosarcoma maydis (Corn smut fungus).